The sequence spans 573 residues: Transcription factor E3 (573 aa).

Position 47 is a phosphoserine; by MTOR (Ser-47). The tract at residues 91-151 (TLSASSSAEG…SPAPASPAIS (61 aa)) is disordered. Positions 107–126 (SSSSSSRVLLRQQLMRAQAQ) are enriched in low complexity. Basic and acidic residues predominate over residues 127 to 136 (EQERRERREQ). Residues 137-151 (ASSFPSPAPASPAIS) show a composition bias toward low complexity. The residue at position 186 (Arg-186) is an Asymmetric dimethylarginine. The segment at 209–248 (LASQALTPPPGGASVQPLPTPEAAHAPGPTSSAPNSPMAL) is disordered. A strong transcription activation domain region spans residues 258-269 (EIDDVIDEIISL). A Phosphoserine; by MTOR modification is found at Ser-319. Lys-337 is covalently cross-linked (Glycyl lysine isopeptide (Lys-Gly) (interchain with G-Cter in SUMO2)). The 54-residue stretch at 344-397 (QKKDNHNLIERRRRFNINDRIKELGTLIPKSSDPEMRWNKGTILKASVDYIRKL) folds into the bHLH domain. Residues 354–357 (RRRR) carry the Nuclear localization signal motif. A leucine-zipper region spans residues 407 to 428 (LESRQRSLEQANRSLQLRIQEL). The segment at 531–573 (VGGLSGGTLSPLRAASDPLLSSVSPAVSKASSRRSSFSMEEES) is disordered. The segment covering 537-573 (GTLSPLRAASDPLLSSVSPAVSKASSRRSSFSMEEES) has biased composition (low complexity). Phosphoserine occurs at positions 540, 546, 552, 554, 558, and 566.

Belongs to the MiT/TFE family. In terms of assembly, homodimer and heterodimer; with TFEB or MITF. Interacts with RRAGC/RagC GDP-bound and RRAGD/RagD GDP-bound; promoting its recruitment to lysosomal membrane in the presence of nutrients. In terms of processing, phosphorylation ar Ser-47 and Ser-319 by MTOR via non-canonical mTORC1 pathway regulates its stability and subcellular location, respectively. When nutrients are present, phosphorylation by MTOR at Ser-47 promotes ubiquitination by the SCF(BTRC) complex, followed by degradation. When nutrients are present, phosphorylation by MTOR at Ser-319 also promotes association with 14-3-3/YWHA adapters and retention in the cytosol. Phosphorylation at Ser-47 plays a more critical role than phosphorylation at Ser-319 for TFE3 inactivation. Inhibition of mTORC1, starvation and lysosomal disruption, promotes dephosphorylation and transcription factor activity. Post-translationally, ubiquitinated by the SCF(BTRC) and SCF(FBXW11) complexes following phosphorylation at Ser-47 by MTOR, leading to its degradation by the proteasome. Sumoylated; does not affect dimerization with MITF.

Its subcellular location is the cytoplasm. It is found in the cytosol. The protein localises to the nucleus. It localises to the lysosome membrane. Its function is as follows. Transcription factor that acts as a master regulator of lysosomal biogenesis and immune response. Specifically recognizes and binds E-box sequences (5'-CANNTG-3'); efficient DNA-binding requires dimerization with itself or with another MiT/TFE family member such as TFEB or MITF. Involved in the cellular response to amino acid availability by acting downstream of MTOR: in the presence of nutrients, TFE3 phosphorylation by MTOR promotes its inactivation. Upon starvation or lysosomal stress, inhibition of MTOR induces TFE3 dephosphorylation, resulting in transcription factor activity. Specifically recognizes and binds the CLEAR-box sequence (5'-GTCACGTGAC-3') present in the regulatory region of many lysosomal genes, leading to activate their expression, thereby playing a central role in expression of lysosomal genes. Maintains the pluripotent state of embryonic stem cells by promoting the expression of genes such as ESRRB; mTOR-dependent TFE3 cytosolic retention and inactivation promotes exit from pluripotency. Required to maintain the naive pluripotent state of hematopoietic stem cell; mTOR-dependent cytoplasmic retention of TFE3 promotes the exit of hematopoietic stem cell from pluripotency. TFE3 activity is also involved in the inhibition of neuronal progenitor differentiation. Acts as a positive regulator of browning of adipose tissue by promoting expression of target genes; mTOR-dependent phosphorylation promotes cytoplasmic retention of TFE3 and inhibits browning of adipose tissue. In association with TFEB, activates the expression of CD40L in T-cells, thereby playing a role in T-cell-dependent antibody responses in activated CD4(+) T-cells and thymus-dependent humoral immunity. Specifically recognizes the MUE3 box, a subset of E-boxes, present in the immunoglobulin enhancer. It also binds very well to a USF/MLTF site. May regulate lysosomal positioning in response to nutrient deprivation by promoting the expression of PIP4P1. This is Transcription factor E3 from Bos taurus (Bovine).